The primary structure comprises 359 residues: Isopentenyl-diphosphate delta-isomerase (359 aa).

12–13 (RK) contributes to the substrate binding site. FMN contacts are provided by residues Ser-68, 69–71 (AMT), Ser-99, and Asn-128. Substrate is bound at residue 99 to 101 (SQR). Position 162 (Gln-162) interacts with substrate. Glu-163 lines the Mg(2+) pocket. Residues Lys-194, Thr-224, 277-279 (GIR), and 298-299 (AL) each bind FMN.

The protein belongs to the IPP isomerase type 2 family. In terms of assembly, homooctamer. Dimer of tetramers. It depends on FMN as a cofactor. NADPH serves as cofactor. Mg(2+) is required as a cofactor.

Its subcellular location is the cytoplasm. It catalyses the reaction isopentenyl diphosphate = dimethylallyl diphosphate. Involved in the biosynthesis of isoprenoids. Catalyzes the 1,3-allylic rearrangement of the homoallylic substrate isopentenyl (IPP) to its allylic isomer, dimethylallyl diphosphate (DMAPP). This Methanoregula boonei (strain DSM 21154 / JCM 14090 / 6A8) protein is Isopentenyl-diphosphate delta-isomerase.